A 413-amino-acid polypeptide reads, in one-letter code: Ribosomal RNA large subunit methyltransferase G (413 aa).

Residues 389–413 (EAEVEQAFDTETPHPQSALYGKPKA) are disordered.

It belongs to the methyltransferase superfamily. RlmG family.

The protein localises to the cytoplasm. It catalyses the reaction guanosine(1835) in 23S rRNA + S-adenosyl-L-methionine = N(2)-methylguanosine(1835) in 23S rRNA + S-adenosyl-L-homocysteine + H(+). Specifically methylates the guanine in position 1835 (m2G1835) of 23S rRNA. This is Ribosomal RNA large subunit methyltransferase G from Shewanella pealeana (strain ATCC 700345 / ANG-SQ1).